The sequence spans 455 residues: ADP-dependent glucose/glucosamine kinase (455 aa).

The 454-residue stretch at 2-455 folds into the ADPK domain; the sequence is PTWEELYKNA…AFIGEFSFTL (454 aa). Residues Asp-34, Glu-88, 112-113, and His-176 contribute to the D-glucose site; that span reads GQ. Glu-195 contributes to the ADP binding site. Position 266 (Glu-266) interacts with Mg(2+). Residue Asn-292 participates in ADP binding. Mg(2+) is bound at residue Glu-295. ADP-binding positions include 342-343, Val-429, and Gly-439; that span reads HT. Asp-440 serves as a coordination point for D-glucose. Asp-440 contributes to the Mg(2+) binding site. Asp-440 functions as the Proton acceptor in the catalytic mechanism.

This sequence belongs to the ADP-dependent glucokinase family. Homodimer. It depends on Mg(2+) as a cofactor.

It localises to the cytoplasm. The catalysed reaction is D-glucose + ADP = D-glucose 6-phosphate + AMP + H(+). The enzyme catalyses D-glucosamine + ADP = D-glucosamine 6-phosphate + AMP + H(+). It participates in carbohydrate degradation; glycolysis. Catalyzes the ADP-dependent phosphorylation of D-glucose to D-glucose 6-phosphate and glucosamine to glucosamine 6-phosphate. Can also use CDP as the phosphoryl group donor and D-1,5-anhydroglucitol as the phosphoryl group acceptor. This is ADP-dependent glucose/glucosamine kinase from Pyrococcus furiosus (strain ATCC 43587 / DSM 3638 / JCM 8422 / Vc1).